The chain runs to 218 residues: Protein N-lysine methyltransferase METTL21A (218 aa).

S-adenosyl-L-methionine is bound by residues Trp47, 73 to 75 (GAG), Asp94, Trp125, and Ala143.

It belongs to the methyltransferase superfamily. METTL21 family.

The protein resides in the cytoplasm. It carries out the reaction L-lysyl-[protein] + 3 S-adenosyl-L-methionine = N(6),N(6),N(6)-trimethyl-L-lysyl-[protein] + 3 S-adenosyl-L-homocysteine + 3 H(+). Its function is as follows. Protein-lysine methyltransferase that selectively trimethylates residues in heat shock protein 70 (HSP70) family members. This chain is Protein N-lysine methyltransferase METTL21A (mettl21a), found in Danio rerio (Zebrafish).